We begin with the raw amino-acid sequence, 745 residues long: Cellulose synthase-like protein E2 (745 aa).

Positions 1-14 (MAGSGGGVVSGGRQ) are enriched in gly residues. Positions 1–20 (MAGSGGGVVSGGRQRGPPLF) are disordered. A run of 2 helical transmembrane segments spans residues 29-49 (AMAAYRVSAATVFAGVLLIWL) and 66-86 (WAWLGMLAAELWFGFYWVLTL). Active-site residues include aspartate 155 and aspartate 458. The next 5 helical transmembrane spans lie at 541–561 (FPTLYYVTIPSLCFLNGISLF), 568–588 (WFIPFAYVMVAAYSCSLAESL), 658–678 (AMFVILTTVALLNLACMVLGI), 686–706 (GPGGLETLFLQAVLCVLIVAI), and 723–743 (LPASVARVSICFVLPLCILSI).

This sequence belongs to the glycosyltransferase 2 family. Plant cellulose synthase-like E subfamily.

It is found in the golgi apparatus membrane. Thought to be a Golgi-localized beta-glycan synthase that polymerize the backbones of noncellulosic polysaccharides (hemicelluloses) of plant cell wall. This is Cellulose synthase-like protein E2 (CSLE2) from Oryza sativa subsp. japonica (Rice).